A 120-amino-acid polypeptide reads, in one-letter code: Aspartate 1-decarboxylase (120 aa).

Ser25 functions as the Schiff-base intermediate with substrate; via pyruvic acid in the catalytic mechanism. The residue at position 25 (Ser25) is a Pyruvic acid (Ser). A substrate-binding site is contributed by Thr57. Tyr58 acts as the Proton donor in catalysis. 73–75 (GAA) is a binding site for substrate.

Belongs to the PanD family. In terms of assembly, heterooctamer of four alpha and four beta subunits. Requires pyruvate as cofactor. Is synthesized initially as an inactive proenzyme, which is activated by self-cleavage at a specific serine bond to produce a beta-subunit with a hydroxyl group at its C-terminus and an alpha-subunit with a pyruvoyl group at its N-terminus.

It is found in the cytoplasm. The catalysed reaction is L-aspartate + H(+) = beta-alanine + CO2. The protein operates within cofactor biosynthesis; (R)-pantothenate biosynthesis; beta-alanine from L-aspartate: step 1/1. In terms of biological role, catalyzes the pyruvoyl-dependent decarboxylation of aspartate to produce beta-alanine. The chain is Aspartate 1-decarboxylase from Thermosipho africanus (strain TCF52B).